The primary structure comprises 205 residues: Small ribosomal subunit protein uS4 (205 aa).

The 59-residue stretch at 91–149 (MRLDALVLRAAFARSISQARQLVVHRHILVDGKLVDRPSYSVSPGQTVKVKPKSVPLDP) folds into the S4 RNA-binding domain.

This sequence belongs to the universal ribosomal protein uS4 family. As to quaternary structure, part of the 30S ribosomal subunit. Contacts protein S5. The interaction surface between S4 and S5 is involved in control of translational fidelity.

One of the primary rRNA binding proteins, it binds directly to 16S rRNA where it nucleates assembly of the body of the 30S subunit. Its function is as follows. With S5 and S12 plays an important role in translational accuracy. This is Small ribosomal subunit protein uS4 from Tropheryma whipplei (strain TW08/27) (Whipple's bacillus).